Reading from the N-terminus, the 1286-residue chain is Protein patched (1286 aa).

Residues 1–76 (MDRDSLPRVP…GSSVQKHAGK (76 aa)) lie on the Cytoplasmic side of the membrane. A helical transmembrane segment spans residues 77–92 (VLFVAILVLSTFCVGL). Residues 93–427 (KSAQIHSKVH…DDILAKFSHP (335 aa)) lie on the Extracellular side of the membrane. N-linked (GlcNAc...) asparagine glycosylation is found at asparagine 142, asparagine 298, asparagine 335, and asparagine 388. Residues 428-448 (SALSIVIGVAVTVLYAFCTLL) traverse the membrane as a helical segment. The region spanning 428–583 (SALSIVIGVA…LLVFPAMISL (156 aa)) is the SSD domain. The Cytoplasmic segment spans residues 449–465 (RWRDPVRGQSSVGVAGV). Residues 466 to 486 (LLMCFSTAAGLGLSALLGIVF) traverse the membrane as a helical segment. At 487-492 (NAASTQ) the chain is on the extracellular side. The chain crosses the membrane as a helical span at residues 493-511 (VVPFLALGLGVDHIFMLTA). The Cytoplasmic portion of the chain corresponds to 512 to 532 (AYAESNRREQTKLILKKVGPS). A helical membrane pass occupies residues 533-553 (ILFSACSTAGSFFAAAFIPVP). Residues 554–562 (ALKVFCLQA) lie on the Extracellular side of the membrane. The chain crosses the membrane as a helical span at residues 563-583 (AIVMCSNLAAALLVFPAMISL). At 584-677 (DLRRRTAGRA…QHYTPFLMRS (94 aa)) the chain is on the cytoplasmic side. The chain crosses the membrane as a helical span at residues 678–699 (WVKFLTVMGFLAALISSLYAST). Over 700-931 (RLQDGLDIID…IRDLSVKYEG (232 aa)) the chain is Extracellular. An N-linked (GlcNAc...) asparagine glycan is attached at asparagine 807. A helical transmembrane segment spans residues 932-952 (FGLPNYPSGIPFIFWEQYMTL). Residues 953 to 955 (RSS) lie on the Cytoplasmic side of the membrane. The chain crosses the membrane as a helical span at residues 956–976 (LAMILACVLLAALVLVSLLLL). Residues 977–1007 (SVWAAVLVILSVLASLAQIFGAMTLLGIKLS) lie on the Extracellular side of the membrane. The chain crosses the membrane as a helical span at residues 1008–1028 (AIPAVILILSVGMMLCFNVLI). Residues 1029–1056 (SLGFMTSVGNRQRRVQLSMQMSLGPLVH) are Cytoplasmic-facing. The helical transmembrane segment at 1057–1077 (GMLTSGVAVFMLSTSPFEFVI) threads the bilayer. Over 1078–1082 (RHFCW) the chain is Extracellular. Residues 1083 to 1103 (LLLVVLCVGACNSLLVFPILL) form a helical membrane-spanning segment. The Cytoplasmic portion of the chain corresponds to 1104–1286 (SMVGPEAELV…RAVRSYNFTS (183 aa)). Residues 1116–1237 (EHPDRISTPS…PPPFPTAYPP (122 aa)) form a disordered region. Polar residues-rich tracts occupy residues 1141–1152 (VQGSRSSRGSCQ) and 1165–1191 (PSLT…NDWT). Residues 1199 to 1216 (PASYAAPPPAYHKAAAQQ) show a composition bias toward low complexity. Positions 1224–1235 (PTTPPPPFPTAY) are enriched in pro residues.

Belongs to the patched family. Interacts (via C-terminal cytoplasmic region) with CG5504/l(2)tid; the interaction is probably direct. Interacts with hh/hedgehog.

The protein localises to the membrane. Its function is as follows. Segmentation polarity protein. Acts as a receptor for the hedgehog protein (hh). Associates with the smoothened protein (SMO) to transduce the hedgehog signal leading to the activation of wingless, decapentaplegic and patched itself. Participates in cell interactions that establish pattern within the segment and the imaginal disks during development. In the absence of HH, represses the constitutive signaling activity of smo through fused (FU). The polypeptide is Protein patched (Drosophila melanogaster (Fruit fly)).